The sequence spans 447 residues: GTPase Der (447 aa).

EngA-type G domains are found at residues 4–165 (QIIT…PEEE) and 180–357 (LQIV…KIWN). Residues 10 to 17 (GRPNVGKS), 57 to 61 (DTPGL), 119 to 122 (NKCE), 186 to 193 (GRPNAGKS), 233 to 237 (DTAGL), and 298 to 301 (NKWD) contribute to the GTP site. The KH-like domain occupies 358–443 (KKITTSKLNE…PIRFIYVKTK (86 aa)).

It belongs to the TRAFAC class TrmE-Era-EngA-EngB-Septin-like GTPase superfamily. EngA (Der) GTPase family. Associates with the 50S ribosomal subunit.

Its function is as follows. GTPase that plays an essential role in the late steps of ribosome biogenesis. This Rickettsia conorii (strain ATCC VR-613 / Malish 7) protein is GTPase Der.